A 507-amino-acid chain; its full sequence is Sterol 14-alpha demethylase CYP51A (507 aa).

A helical transmembrane segment spans residues 7–29 (YPLWVLVALFAVIIANLLYQQLP). A lanosterol-binding site is contributed by Tyr105. Cys449 is a binding site for heme.

This sequence belongs to the cytochrome P450 family. It depends on heme as a cofactor.

It is found in the endoplasmic reticulum membrane. The catalysed reaction is a 14alpha-methyl steroid + 3 reduced [NADPH--hemoprotein reductase] + 3 O2 = a Delta(14) steroid + formate + 3 oxidized [NADPH--hemoprotein reductase] + 4 H2O + 4 H(+). It carries out the reaction a 14alpha-methyl steroid + reduced [NADPH--hemoprotein reductase] + O2 = a 14alpha-hydroxymethyl steroid + oxidized [NADPH--hemoprotein reductase] + H2O + H(+). It catalyses the reaction a 14alpha-hydroxymethyl steroid + reduced [NADPH--hemoprotein reductase] + O2 = a 14alpha-formyl steroid + oxidized [NADPH--hemoprotein reductase] + 2 H2O + H(+). The enzyme catalyses a 14alpha-formyl steroid + reduced [NADPH--hemoprotein reductase] + O2 = a Delta(14) steroid + formate + oxidized [NADPH--hemoprotein reductase] + H2O + 2 H(+). The catalysed reaction is lanosterol + 3 reduced [NADPH--hemoprotein reductase] + 3 O2 = 4,4-dimethyl-5alpha-cholesta-8,14,24-trien-3beta-ol + formate + 3 oxidized [NADPH--hemoprotein reductase] + 4 H2O + 4 H(+). It carries out the reaction lanosterol + reduced [NADPH--hemoprotein reductase] + O2 = 32-hydroxylanosterol + oxidized [NADPH--hemoprotein reductase] + H2O + H(+). It catalyses the reaction 32-hydroxylanosterol + reduced [NADPH--hemoprotein reductase] + O2 = 32-oxolanosterol + oxidized [NADPH--hemoprotein reductase] + 2 H2O + H(+). The enzyme catalyses 32-oxolanosterol + reduced [NADPH--hemoprotein reductase] + O2 = 4,4-dimethyl-5alpha-cholesta-8,14,24-trien-3beta-ol + formate + oxidized [NADPH--hemoprotein reductase] + H2O + 2 H(+). The catalysed reaction is eburicol + 3 reduced [NADPH--hemoprotein reductase] + 3 O2 = 14-demethyleburicol + formate + 3 oxidized [NADPH--hemoprotein reductase] + 4 H2O + 4 H(+). It carries out the reaction eburicol + reduced [NADPH--hemoprotein reductase] + O2 = 32-hydroxyeburicol + oxidized [NADPH--hemoprotein reductase] + H2O + H(+). It catalyses the reaction 32-hydroxyeburicol + reduced [NADPH--hemoprotein reductase] + O2 = 32-oxoeburicol + oxidized [NADPH--hemoprotein reductase] + 2 H2O + H(+). The enzyme catalyses 32-oxoeburicol + reduced [NADPH--hemoprotein reductase] + O2 = 14-demethyleburicol + formate + oxidized [NADPH--hemoprotein reductase] + H2O + 2 H(+). It participates in steroid metabolism; ergosterol biosynthesis. Its function is as follows. Together with cyp51B and cyp51C, encodes the sterol 14alpha-demethylase that plays a critical role in the third module of ergosterol biosynthesis pathway, being ergosterol the major sterol component in fungal membranes that participates in a variety of functions. CYP51A encodes the sterol 14-alpha-demethylase induced on ergosterol depletion and is responsible for the intrinsic variation in azole sensitivity. The third module or late pathway involves the ergosterol synthesis itself through consecutive reactions that mainly occur in the endoplasmic reticulum (ER) membrane. In filamentous fungi, during the initial step of this module, lanosterol (lanosta-8,24-dien-3beta-ol) can be metabolized to eburicol. Sterol 14alpha-demethylase catalyzes the three-step oxidative removal of the 14alpha-methyl group (C-32) of both these sterols in the form of formate, and converts eburicol and lanosterol to 14-demethyleburicol (4,4,24-trimethylergosta-8,14,24(28)-trienol) and 4,4-dimethyl-5alpha-cholesta-8,14,24-trien-3beta-ol, respectively, which are further metabolized by other enzymes in the pathway to ergosterol. Can also use substrates not intrinsic to fungi, such as 24,25-dihydrolanosterol (DHL), producing 4,4'-dimethyl-8,14-cholestadien-3-beta-ol, but at lower rates than the endogenous substrates. This Gibberella zeae (strain ATCC MYA-4620 / CBS 123657 / FGSC 9075 / NRRL 31084 / PH-1) (Wheat head blight fungus) protein is Sterol 14-alpha demethylase CYP51A.